A 504-amino-acid chain; its full sequence is Kinesin light chain 3 (504 aa).

The stretch at 90–150 (ALSAHVGALE…EEEKRHLEFL (61 aa)) forms a coiled coil. The tract at residues 153–197 (LRQYDPPAESQQSESPPRRDSLASLFPSEEEERKGPEAAGAAAAQ) is disordered. Residues 158–167 (PPAESQQSES) are compositionally biased toward low complexity. S173 is modified (phosphoserine). TPR repeat units follow at residues 207 to 240 (LRTLHNLVIQYAGQGRYEVAVPLCRQALEDLERS), 249 to 282 (ATMLNILALVYRDQNKYKEATDLLHDALQIREQT), 291 to 324 (AATLNNLAVLYGKRGRYREAEPLCQRALEIREKV), 333 to 366 (AKQLNNLALLCQNQGKFEDVERHYARALSIYEAL), and 375 to 408 (AKTKNNLASAYLKQNKYQQAEELYKEILHKEDLP). Residues 411 to 438 (LGAPNTGTAGDAEQALRRSSSLSKIRES) form a disordered region. S466 carries the phosphoserine modification. The disordered stretch occupies residues 472–504 (VDAPRAPGTQFPSWHLDKAPRTLSASTQDLSPH). The segment covering 494 to 504 (LSASTQDLSPH) has biased composition (polar residues). A Phosphothreonine modification is found at T498. Position 502 is a phosphoserine (S502).

This sequence belongs to the kinesin light chain family. As to quaternary structure, oligomer composed of two heavy chains and two light chains. Associates with microtubulin in an ATP-dependent manner. Interacts with KIF5C. Interacts with ODF1. Interacts with LRGUK. Interacts with VDAC2.

The protein resides in the cytoplasm. It localises to the cytoskeleton. The protein localises to the mitochondrion. Functionally, kinesin is a microtubule-associated force-producing protein that may play a role in organelle transport. Plays a role during spermiogenesis in the development of the sperm tail midpiece and in the normal function of spermatozoa. May play a role in the formation of the mitochondrial sheath formation in the developing spermatid midpiece. In Homo sapiens (Human), this protein is Kinesin light chain 3 (KLC3).